The primary structure comprises 559 residues: GTP diphosphokinase CRSH2, chloroplastic (559 aa).

The N-terminal 37 residues, 1–37, are a transit peptide targeting the chloroplast; the sequence is MASAGGEVVVVDPAAAAVAPDVEHHAPAPRLTPAGSG. The 101-residue stretch at 87–187 folds into the HD domain; it reads SLARALIVAA…LELAIRLDAM (101 aa). 2 EF-hand domains span residues 449-484 and 486-518; these read ASAG…LGAG and KDAE…VELK. Residues Asp462, Asn464, Asp466, Arg468, Glu473, Asp496, Asn498, Asp500, Ser502, and Glu507 each coordinate Ca(2+).

Belongs to the RelA/SpoT family. In terms of tissue distribution, expressed in shoots.

The protein localises to the plastid. The protein resides in the chloroplast. It catalyses the reaction GTP + ATP = guanosine 3'-diphosphate 5'-triphosphate + AMP. With respect to regulation, activated by calcium. Its function is as follows. Possesses calcium-dependent ppGpp (guanosine 3'-diphosphate 5'-diphosphate) synthetase activity in vitro and is able to functionally complement E.coli relA mutants. May be involved in a rapid plant ppGpp-mediated response to pathogens and other stresses. This Oryza sativa subsp. japonica (Rice) protein is GTP diphosphokinase CRSH2, chloroplastic.